Here is a 178-residue protein sequence, read N- to C-terminus: uncharacterized protein (178 aa).

Functionally, this protein is non-essential for virus function. This is an uncharacterized protein from Sulfolobus spindle-shape virus 1 (SSV1).